The chain runs to 347 residues: Molybdenum cofactor biosynthesis bifunctional protein (347 aa).

Residues 1 to 158 (MFTHLDENQQ…EKTGGKADVS (158 aa)) form a molybdenum cofactor biosynthesis protein C region. Substrate is bound by residues 75 to 77 (FCH) and 116 to 117 (ME). Catalysis depends on aspartate 131, which acts as the For MoaC activity. Positions 159–347 (QTPLYGLVLT…NSPEDYGQIN (189 aa)) are molybdenum cofactor guanylyltransferase. GTP is bound by residues 167-169 (LTG), lysine 179, aspartate 226, and aspartate 255. Aspartate 255 lines the Mg(2+) pocket.

It in the N-terminal section; belongs to the MoaC family. The protein in the C-terminal section; belongs to the MobA family. Mg(2+) serves as cofactor.

Its subcellular location is the cytoplasm. It carries out the reaction Mo-molybdopterin + GTP + H(+) = Mo-molybdopterin guanine dinucleotide + diphosphate. The catalysed reaction is (8S)-3',8-cyclo-7,8-dihydroguanosine 5'-triphosphate = cyclic pyranopterin phosphate + diphosphate. The protein operates within cofactor biosynthesis; molybdopterin biosynthesis. Its function is as follows. Catalyzes the conversion of (8S)-3',8-cyclo-7,8-dihydroguanosine 5'-triphosphate to cyclic pyranopterin monophosphate (cPMP). Functionally, transfers a GMP moiety from GTP to Mo-molybdopterin (Mo-MPT) cofactor (Moco or molybdenum cofactor) to form Mo-molybdopterin guanine dinucleotide (Mo-MGD) cofactor. The chain is Molybdenum cofactor biosynthesis bifunctional protein (moaC/mobA) from Synechocystis sp. (strain ATCC 27184 / PCC 6803 / Kazusa).